A 405-amino-acid chain; its full sequence is Interferon alpha/beta receptor 1a (405 aa).

The first 20 residues, 1–20 (MKVGFALVLLWSLPITNVLA), serve as a signal peptide directing secretion. At 21–233 (ELPQPQNLTL…QTEGDTPYGQ (213 aa)) the chain is on the extracellular side. Fibronectin type-III domains are found at residues 22–123 (LPQP…IDAS) and 126–228 (PPSR…TEGD). N-linked (GlcNAc...) asparagine glycosylation is found at Asn-27 and Asn-70. Disulfide bonds link Cys-75/Cys-83 and Cys-201/Cys-222. Residue Asn-212 is glycosylated (N-linked (GlcNAc...) asparagine). The helical transmembrane segment at 234–254 (IFLYFLVSMMVCFLLVLLSSY) threads the bilayer. At 255–405 (AFFRFYRGLK…LDEGVVDICV (151 aa)) the chain is on the cytoplasmic side. A disordered region spans residues 325–374 (TAPPSELEQDSGRRIRQDSGDSGIYSTEGGSAQQGRSGGEPIRRDQEVDS). The segment covering 334–343 (DSGRRIRQDS) has biased composition (basic and acidic residues). The span at 348–359 (IYSTEGGSAQQG) shows a compositional bias: polar residues.

This sequence belongs to the type II cytokine receptor family. As to quaternary structure, heterodimer with IFNAR2; forming the receptor for type I interferon.

Its subcellular location is the cell membrane. Together with IFNAR2, forms the heterodimeric receptor for type I interferons (including interferons alpha, beta, epsilon, omega and kappa). Type I interferon binding activates the JAK-STAT signaling cascade, resulting in transcriptional activation or repression of interferon-regulated genes that encode the effectors of the interferon response. Mechanistically, type I interferon-binding brings the IFNAR1 and IFNAR2 subunits into close proximity with one another, driving their associated Janus kinases (JAKs) (TYK2 bound to IFNAR1 and JAK1 bound to IFNAR2) to cross-phosphorylate one another. The activated kinases phosphorylate specific tyrosine residues on the intracellular domains of IFNAR1 and IFNAR2, forming docking sites for the STAT transcription factors. STAT proteins are then phosphorylated by the JAKs, promoting their translocation into the nucleus to regulate expression of interferon-regulated genes. In Oncorhynchus mykiss (Rainbow trout), this protein is Interferon alpha/beta receptor 1a.